The following is a 411-amino-acid chain: Protein BTN1 (411 aa).

An N-terminal signal peptide occupies residues 1–29 (MNSKQRVYAFFWIFGLVNNVLYVVILSAA). A run of 8 helical transmembrane segments spans residues 41–61 (LVLL…PFFI), 79–99 (IGMI…IAMA), 127–147 (SGTG…TSIF), 149–169 (LPIR…LLYF), 281–300 (YVTY…SLAH), 307–329 (LYFL…WIYI), 334–356 (WPIM…NTFL), and 371–391 (LGAV…VGLG).

It belongs to the battenin family.

The protein localises to the vacuole membrane. Functionally, involved in vacuolar transport and vacuole pH homeostasis. Also required for cytokinesis. This Candida glabrata (strain ATCC 2001 / BCRC 20586 / JCM 3761 / NBRC 0622 / NRRL Y-65 / CBS 138) (Yeast) protein is Protein BTN1 (BTN1).